Here is a 374-residue protein sequence, read N- to C-terminus: Peptide chain release factor 2 (374 aa).

Q254 is modified (N5-methylglutamine).

This sequence belongs to the prokaryotic/mitochondrial release factor family. Methylated by PrmC. Methylation increases the termination efficiency of RF2.

It is found in the cytoplasm. Its function is as follows. Peptide chain release factor 2 directs the termination of translation in response to the peptide chain termination codons UGA and UAA. This is Peptide chain release factor 2 from Renibacterium salmoninarum (strain ATCC 33209 / DSM 20767 / JCM 11484 / NBRC 15589 / NCIMB 2235).